Here is an 861-residue protein sequence, read N- to C-terminus: Protein argonaute-4 (861 aa).

The region spanning Pro-219–Ala-338 is the PAZ domain. The region spanning Leu-509–Val-820 is the Piwi domain. The segment at Asp-825 to Lys-846 is disordered.

This sequence belongs to the argonaute family. Ago subfamily. Interacts with EIF4B, IMP8, PRMT5, TNRC6A and TNRC6B. Interacts with ZFP36. Ubiquitinated on surface-exposed lysines by a SCF-like E3 ubiquitin-protein ligase complex containing ZSWIM8 during target-directed microRNA degradation (TDMD), a process that mediates degradation of microRNAs (miRNAs). Ubiquitination by the SCF-like E3 ubiquitin-protein ligase complex containing ZSWIM8 leads to its subsequent degradation, thereby exposing miRNAs for degradation. ZSWIM8 recognizes and binds AGO4 when it is engaged with a TDMD target.

Its subcellular location is the cytoplasm. It localises to the P-body. Its function is as follows. Required for RNA-mediated gene silencing (RNAi). Binds to short RNAs such as microRNAs (miRNAs) and represses the translation of mRNAs which are complementary to them. Lacks endonuclease activity and does not appear to cleave target mRNAs. The protein is Protein argonaute-4 (Ago4) of Mus musculus (Mouse).